Here is a 178-residue protein sequence, read N- to C-terminus: ATP synthase subunit b (178 aa).

Residues 19-39 (ITGIGFVILLFIAIKYIVPAF) traverse the membrane as a helical segment.

It belongs to the ATPase B chain family. As to quaternary structure, F-type ATPases have 2 components, F(1) - the catalytic core - and F(0) - the membrane proton channel. F(1) has five subunits: alpha(3), beta(3), gamma(1), delta(1), epsilon(1). F(0) has three main subunits: a(1), b(2) and c(10-14). The alpha and beta chains form an alternating ring which encloses part of the gamma chain. F(1) is attached to F(0) by a central stalk formed by the gamma and epsilon chains, while a peripheral stalk is formed by the delta and b chains.

It localises to the cell membrane. Functionally, f(1)F(0) ATP synthase produces ATP from ADP in the presence of a proton or sodium gradient. F-type ATPases consist of two structural domains, F(1) containing the extramembraneous catalytic core and F(0) containing the membrane proton channel, linked together by a central stalk and a peripheral stalk. During catalysis, ATP synthesis in the catalytic domain of F(1) is coupled via a rotary mechanism of the central stalk subunits to proton translocation. Its function is as follows. Component of the F(0) channel, it forms part of the peripheral stalk, linking F(1) to F(0). The polypeptide is ATP synthase subunit b (Kocuria rhizophila (strain ATCC 9341 / DSM 348 / NBRC 103217 / DC2201)).